We begin with the raw amino-acid sequence, 142 residues long: Large ribosomal subunit protein uL16 (142 aa).

It belongs to the universal ribosomal protein uL16 family. Part of the 50S ribosomal subunit.

Binds 23S rRNA and is also seen to make contacts with the A and possibly P site tRNAs. This Thermotoga neapolitana (strain ATCC 49049 / DSM 4359 / NBRC 107923 / NS-E) protein is Large ribosomal subunit protein uL16.